A 324-amino-acid chain; its full sequence is Succinylglutamate desuccinylase (324 aa).

Zn(2+)-binding residues include His53, Glu56, and His148. The active site involves Glu211.

This sequence belongs to the AspA/AstE family. Succinylglutamate desuccinylase subfamily. Zn(2+) serves as cofactor.

It carries out the reaction N-succinyl-L-glutamate + H2O = L-glutamate + succinate. It functions in the pathway amino-acid degradation; L-arginine degradation via AST pathway; L-glutamate and succinate from L-arginine: step 5/5. Transforms N(2)-succinylglutamate into succinate and glutamate. In Acinetobacter baumannii (strain AB0057), this protein is Succinylglutamate desuccinylase.